The following is a 350-amino-acid chain: Protein RecA (350 aa).

67-74 (GPESSGKT) lines the ATP pocket.

This sequence belongs to the RecA family.

It localises to the cytoplasm. In terms of biological role, can catalyze the hydrolysis of ATP in the presence of single-stranded DNA, the ATP-dependent uptake of single-stranded DNA by duplex DNA, and the ATP-dependent hybridization of homologous single-stranded DNAs. It interacts with LexA causing its activation and leading to its autocatalytic cleavage. This chain is Protein RecA, found in Wolinella succinogenes (strain ATCC 29543 / DSM 1740 / CCUG 13145 / JCM 31913 / LMG 7466 / NCTC 11488 / FDC 602W) (Vibrio succinogenes).